A 495-amino-acid chain; its full sequence is Probable cytosol aminopeptidase (495 aa).

Residues Lys267 and Asp272 each contribute to the Mn(2+) site. Lys279 is an active-site residue. Residues Asp290, Asp349, and Glu351 each contribute to the Mn(2+) site. Arg353 is an active-site residue.

It belongs to the peptidase M17 family. Mn(2+) is required as a cofactor.

It localises to the cytoplasm. The enzyme catalyses Release of an N-terminal amino acid, Xaa-|-Yaa-, in which Xaa is preferably Leu, but may be other amino acids including Pro although not Arg or Lys, and Yaa may be Pro. Amino acid amides and methyl esters are also readily hydrolyzed, but rates on arylamides are exceedingly low.. The catalysed reaction is Release of an N-terminal amino acid, preferentially leucine, but not glutamic or aspartic acids.. Functionally, presumably involved in the processing and regular turnover of intracellular proteins. Catalyzes the removal of unsubstituted N-terminal amino acids from various peptides. This chain is Probable cytosol aminopeptidase, found in Histophilus somni (strain 129Pt) (Haemophilus somnus).